A 60-amino-acid polypeptide reads, in one-letter code: DNA-directed RNA polymerase subunit Rpo6 (60 aa).

It belongs to the archaeal Rpo6/eukaryotic RPB6 RNA polymerase subunit family. Part of the RNA polymerase complex.

It is found in the cytoplasm. It catalyses the reaction RNA(n) + a ribonucleoside 5'-triphosphate = RNA(n+1) + diphosphate. Its function is as follows. DNA-dependent RNA polymerase (RNAP) catalyzes the transcription of DNA into RNA using the four ribonucleoside triphosphates as substrates. The sequence is that of DNA-directed RNA polymerase subunit Rpo6 from Methanosarcina acetivorans (strain ATCC 35395 / DSM 2834 / JCM 12185 / C2A).